Reading from the N-terminus, the 404-residue chain is Biflaviolin synthase CYP158A2 (404 aa).

Flaviolin contacts are provided by Arg288 and Leu293. Position 353 (Cys353) interacts with heme.

Belongs to the cytochrome P450 family. Requires heme as cofactor.

The enzyme catalyses 2 flaviolin + 2 reduced [2Fe-2S]-[ferredoxin] + O2 + H(+) = 3,3'-biflaviolin + 2 oxidized [2Fe-2S]-[ferredoxin] + 2 H2O. It carries out the reaction 2 flaviolin + 2 reduced [2Fe-2S]-[ferredoxin] + O2 + H(+) = 3,8'-biflaviolin + 2 oxidized [2Fe-2S]-[ferredoxin] + 2 H2O. Its pathway is pigment biosynthesis. Its function is as follows. Catalyzes oxidative C-C coupling reaction to polymerize flaviolin and form highly conjugated pigments which protect the soil bacterium from deleterious effects of UV irradiation (three isomers of biflaviolin and one triflaviolin). The protein is Biflaviolin synthase CYP158A2 of Streptomyces coelicolor (strain ATCC BAA-471 / A3(2) / M145).